We begin with the raw amino-acid sequence, 27 residues long: Kunitz-type serine protease inhibitor 3 (27 aa).

The 27-residue stretch at 1–27 folds into the BPTI/Kunitz inhibitor domain; the sequence is EVHNFACLGKPDPGGCAHYIYRRYYYV.

The protein localises to the secreted. Its function is as follows. Inhibits bovine trypsin and human neutrophil elastase. This is Kunitz-type serine protease inhibitor 3 from Rhipicephalus microplus (Cattle tick).